The primary structure comprises 326 residues: Chitinase 12 (326 aa).

The first 21 residues, 1–21 (MRALAVVAMVATAFLAAAVHA), serve as a signal peptide directing secretion. One can recognise a Chitin-binding type-1 domain in the interval 22 to 62 (EQCGSQAGGAVCPNCLCCSQFGWCGSTSDYCGAGCQSQCSA). Intrachain disulfides connect cysteine 24–cysteine 39, cysteine 33–cysteine 45, cysteine 36–cysteine 65, cysteine 38–cysteine 52, cysteine 56–cysteine 60, cysteine 102–cysteine 165, cysteine 179–cysteine 187, and cysteine 286–cysteine 318. Glutamate 147 serves as the catalytic Proton donor.

The protein belongs to the glycosyl hydrolase 19 family. Chitinase class I subfamily. In terms of tissue distribution, expressed in meristems and at lower levels in roots and sheaths.

It catalyses the reaction Random endo-hydrolysis of N-acetyl-beta-D-glucosaminide (1-&gt;4)-beta-linkages in chitin and chitodextrins.. Hydrolyzes chitin and plays a role in defense against fungal pathogens containing chitin. Its overexpression confers enhanced resistance to sheath blight pathogen (R.solani). The polypeptide is Chitinase 12 (Cht12) (Oryza sativa subsp. japonica (Rice)).